The primary structure comprises 329 residues: Replication factor C small subunit (329 aa).

51-58 (GPPGTGKT) serves as a coordination point for ATP.

It belongs to the activator 1 small subunits family. RfcS subfamily. Heteromultimer composed of small subunits (RfcS) and large subunits (RfcL).

Part of the RFC clamp loader complex which loads the PCNA sliding clamp onto DNA. This Staphylothermus marinus (strain ATCC 43588 / DSM 3639 / JCM 9404 / F1) protein is Replication factor C small subunit.